Here is a 191-residue protein sequence, read N- to C-terminus: Potassium-transporting ATPase KdpC subunit (191 aa).

Residues 6–26 (PALVLFILLTLLTGGVYPLLT) form a helical membrane-spanning segment.

Belongs to the KdpC family. The system is composed of three essential subunits: KdpA, KdpB and KdpC.

The protein localises to the cell inner membrane. Functionally, part of the high-affinity ATP-driven potassium transport (or Kdp) system, which catalyzes the hydrolysis of ATP coupled with the electrogenic transport of potassium into the cytoplasm. This subunit acts as a catalytic chaperone that increases the ATP-binding affinity of the ATP-hydrolyzing subunit KdpB by the formation of a transient KdpB/KdpC/ATP ternary complex. This Klebsiella pneumoniae (strain 342) protein is Potassium-transporting ATPase KdpC subunit.